The sequence spans 152 residues: Multiprotein-bridging factor 1 (152 aa).

2 stretches are compositionally biased toward polar residues: residues 1–11 and 22–32; these read MSSDWDTNTVI and PRQQVARTQGQ. The disordered stretch occupies residues 1–32; the sequence is MSSDWDTNTVIGQRVRTGGSGPRQQVARTQGQ. One can recognise an HTH cro/C1-type domain in the interval 86–140; that stretch reads IAKGRGDKGMTQKDLATRINEKPTVINDYEAGRAIPNQQILAKMERALGVKLRGK. Residues 97–116 constitute a DNA-binding region (H-T-H motif); it reads QKDLATRINEKPTVINDYEA.

The protein belongs to the MBF1 family.

Its function is as follows. Transcriptional coactivator that stimulates GCN4-dependent transcriptional activity by bridging the DNA-binding region of GCN4 and TBP (SPT15), thereby recruiting TBP to GCN4-bound promoters. Involved in induction of the ribosome quality control (RQC) pathway; a pathway that degrades nascent peptide chains during problematic translation. Required to prevent stalled ribosomes from frameshifting. This chain is Multiprotein-bridging factor 1 (MBF1), found in Eremothecium gossypii (strain ATCC 10895 / CBS 109.51 / FGSC 9923 / NRRL Y-1056) (Yeast).